Here is a 252-residue protein sequence, read N- to C-terminus: 5'-nucleotidase SurE (252 aa).

The a divalent metal cation site is built by Asp-8, Asp-9, Ser-39, and Asn-95.

Belongs to the SurE nucleotidase family. A divalent metal cation serves as cofactor.

It localises to the cytoplasm. The catalysed reaction is a ribonucleoside 5'-phosphate + H2O = a ribonucleoside + phosphate. Its function is as follows. Nucleotidase that shows phosphatase activity on nucleoside 5'-monophosphates. The sequence is that of 5'-nucleotidase SurE from Clostridium botulinum (strain Loch Maree / Type A3).